The sequence spans 237 residues: Sugar fermentation stimulation protein homolog (237 aa).

It belongs to the SfsA family.

This chain is Sugar fermentation stimulation protein homolog, found in Thioalkalivibrio sulfidiphilus (strain HL-EbGR7).